The following is a 175-amino-acid chain: Transcription factor E (175 aa).

Residues 3-88 (DNPLIQQVLF…TWKPSLEKLP (86 aa)) form the HTH TFE/IIEalpha-type domain.

It belongs to the TFE family. Monomer. Interaction with RNA polymerase subunits RpoF and RpoE is necessary for Tfe stimulatory transcription activity. Able to interact with Tbp and RNA polymerase in the absence of DNA promoter. Interacts both with the preinitiation and elongation complexes.

Its function is as follows. Transcription factor that plays a role in the activation of archaeal genes transcribed by RNA polymerase. Facilitates transcription initiation by enhancing TATA-box recognition by TATA-box-binding protein (Tbp), and transcription factor B (Tfb) and RNA polymerase recruitment. Not absolutely required for transcription in vitro, but particularly important in cases where Tbp or Tfb function is not optimal. It dynamically alters the nucleic acid-binding properties of RNA polymerases by stabilizing the initiation complex and destabilizing elongation complexes. Seems to translocate with the RNA polymerase following initiation and acts by binding to the non template strand of the transcription bubble in elongation complexes. The sequence is that of Transcription factor E from Methanococcus vannielii (strain ATCC 35089 / DSM 1224 / JCM 13029 / OCM 148 / SB).